The sequence spans 373 residues: Dual-specificity RNA methyltransferase RlmN (373 aa).

The Proton acceptor role is filled by Glu94. The region spanning 100–339 (EDDRATLCVS…VIVRKTRGDD (240 aa)) is the Radical SAM core domain. An intrachain disulfide couples Cys107 to Cys344. Residues Cys114, Cys118, and Cys121 each contribute to the [4Fe-4S] cluster site. S-adenosyl-L-methionine contacts are provided by residues 168 to 169 (GE), Ser200, 222 to 224 (SIH), and Asn301. The active-site S-methylcysteine intermediate is Cys344.

This sequence belongs to the radical SAM superfamily. RlmN family. The cofactor is [4Fe-4S] cluster.

Its subcellular location is the cytoplasm. The catalysed reaction is adenosine(2503) in 23S rRNA + 2 reduced [2Fe-2S]-[ferredoxin] + 2 S-adenosyl-L-methionine = 2-methyladenosine(2503) in 23S rRNA + 5'-deoxyadenosine + L-methionine + 2 oxidized [2Fe-2S]-[ferredoxin] + S-adenosyl-L-homocysteine. It carries out the reaction adenosine(37) in tRNA + 2 reduced [2Fe-2S]-[ferredoxin] + 2 S-adenosyl-L-methionine = 2-methyladenosine(37) in tRNA + 5'-deoxyadenosine + L-methionine + 2 oxidized [2Fe-2S]-[ferredoxin] + S-adenosyl-L-homocysteine. In terms of biological role, specifically methylates position 2 of adenine 2503 in 23S rRNA and position 2 of adenine 37 in tRNAs. m2A2503 modification seems to play a crucial role in the proofreading step occurring at the peptidyl transferase center and thus would serve to optimize ribosomal fidelity. The sequence is that of Dual-specificity RNA methyltransferase RlmN from Shewanella sp. (strain MR-7).